A 214-amino-acid polypeptide reads, in one-letter code: A-type ATP synthase subunit D (214 aa).

Belongs to the V-ATPase D subunit family. Has multiple subunits with at least A(3), B(3), C, D, E, F, H, I and proteolipid K(x).

It is found in the cell membrane. In terms of biological role, component of the A-type ATP synthase that produces ATP from ADP in the presence of a proton gradient across the membrane. The chain is A-type ATP synthase subunit D from Thermococcus gammatolerans (strain DSM 15229 / JCM 11827 / EJ3).